The chain runs to 126 residues: Methylglyoxal synthase (126 aa).

The region spanning 1–126 (MAGGKCIALI…AERLIKTLNH (126 aa)) is the MGS-like domain. Substrate is bound by residues H12, K16, 38–41 (TGTT), and 59–60 (SG). D65 (proton donor/acceptor) is an active-site residue. Residue H92 participates in substrate binding.

Belongs to the methylglyoxal synthase family.

The enzyme catalyses dihydroxyacetone phosphate = methylglyoxal + phosphate. Its function is as follows. Catalyzes the formation of methylglyoxal from dihydroxyacetone phosphate. In Rhizobium rhizogenes (strain K84 / ATCC BAA-868) (Agrobacterium radiobacter), this protein is Methylglyoxal synthase.